Reading from the N-terminus, the 297-residue chain is Transmembrane protein 169 (297 aa).

A disordered region spans residues 1–85 (MEEPTAVEGQ…KEEEGDDFLD (85 aa)). Topologically, residues 1-159 (MEEPTAVEGQ…CQMGADRGPH (159 aa)) are extracellular. Residues 61-85 (KTDEEPGESEGGDQPKEEEGDDFLD) are compositionally biased toward acidic residues. Residues 160–180 (VVLWTLICLPVVFILSFVVSF) traverse the membrane as a helical segment. Topologically, residues 181–210 (YYGTITWYNIFLVYNEERTFWHKISYCPCL) are cytoplasmic. The helical transmembrane segment at 211–231 (VLFYPVLIMAMASSLGLYAAV) threads the bilayer. The Extracellular segment spans residues 232–297 (VQLSWSWEAW…PIQEVETSTV (66 aa)).

The protein localises to the membrane. This is Transmembrane protein 169 (TMEM169) from Homo sapiens (Human).